We begin with the raw amino-acid sequence, 319 residues long: ATP-dependent 6-phosphofructokinase (319 aa).

G11 contacts ATP. An ADP-binding site is contributed by 21–25 (RAVVR). Residues 72-73 (RY) and 102-105 (GDGS) contribute to the ATP site. Residue D103 coordinates Mg(2+). Residue 125 to 127 (TID) coordinates substrate. D127 acts as the Proton acceptor in catalysis. R154 contributes to the ADP binding site. Residues R162 and 169–171 (MGR) each bind substrate. Residues 185–187 (GAE), R211, and 213–215 (KKH) contribute to the ADP site. Residues E222, R243, and 249–252 (HVQR) contribute to the substrate site.

This sequence belongs to the phosphofructokinase type A (PFKA) family. ATP-dependent PFK group I subfamily. Prokaryotic clade 'B1' sub-subfamily. Homotetramer. Mg(2+) serves as cofactor.

It is found in the cytoplasm. It carries out the reaction beta-D-fructose 6-phosphate + ATP = beta-D-fructose 1,6-bisphosphate + ADP + H(+). It participates in carbohydrate degradation; glycolysis; D-glyceraldehyde 3-phosphate and glycerone phosphate from D-glucose: step 3/4. Its activity is regulated as follows. Allosterically activated by ADP and other diphosphonucleosides, and allosterically inhibited by phosphoenolpyruvate. Its function is as follows. Catalyzes the phosphorylation of D-fructose 6-phosphate to fructose 1,6-bisphosphate by ATP, the first committing step of glycolysis. The chain is ATP-dependent 6-phosphofructokinase from Listeria monocytogenes serotype 4b (strain CLIP80459).